Here is a 209-residue protein sequence, read N- to C-terminus: Urease accessory protein UreG (209 aa).

11 to 18 (GPVGSGKT) contributes to the GTP binding site.

It belongs to the SIMIBI class G3E GTPase family. UreG subfamily. Homodimer. UreD, UreF and UreG form a complex that acts as a GTP-hydrolysis-dependent molecular chaperone, activating the urease apoprotein by helping to assemble the nickel containing metallocenter of UreC. The UreE protein probably delivers the nickel.

The protein resides in the cytoplasm. Functionally, facilitates the functional incorporation of the urease nickel metallocenter. This process requires GTP hydrolysis, probably effectuated by UreG. This Edwardsiella ictaluri (strain 93-146) protein is Urease accessory protein UreG.